Here is a 158-residue protein sequence, read N- to C-terminus: Phosphopantetheine adenylyltransferase (158 aa).

Position 9 (threonine 9) interacts with substrate. ATP is bound by residues 9–10 and histidine 17; that span reads TF. Substrate contacts are provided by lysine 41, leucine 73, and arginine 87. ATP-binding positions include 88–90, glutamate 98, and 123–129; these read GVR and WSYVSST.

The protein belongs to the bacterial CoaD family. As to quaternary structure, homohexamer. Requires Mg(2+) as cofactor.

Its subcellular location is the cytoplasm. It carries out the reaction (R)-4'-phosphopantetheine + ATP + H(+) = 3'-dephospho-CoA + diphosphate. The protein operates within cofactor biosynthesis; coenzyme A biosynthesis; CoA from (R)-pantothenate: step 4/5. Reversibly transfers an adenylyl group from ATP to 4'-phosphopantetheine, yielding dephospho-CoA (dPCoA) and pyrophosphate. The protein is Phosphopantetheine adenylyltransferase of Histophilus somni (strain 129Pt) (Haemophilus somnus).